The chain runs to 276 residues: Undecaprenyl-diphosphatase (276 aa).

7 helical membrane passes run 12-34 (LGIV…IVVG), 43-63 (TATA…MWEF), 85-105 (FNLL…ADLI), 108-128 (WLFN…IMLW), 185-205 (TEFS…YSLF), 218-238 (IFAI…RALL), and 249-269 (FAWY…LHLI).

Belongs to the UppP family.

It localises to the cell inner membrane. It carries out the reaction di-trans,octa-cis-undecaprenyl diphosphate + H2O = di-trans,octa-cis-undecaprenyl phosphate + phosphate + H(+). In terms of biological role, catalyzes the dephosphorylation of undecaprenyl diphosphate (UPP). Confers resistance to bacitracin. The sequence is that of Undecaprenyl-diphosphatase from Ectopseudomonas mendocina (strain ymp) (Pseudomonas mendocina).